A 213-amino-acid chain; its full sequence is Orotate phosphoribosyltransferase (213 aa).

Lys-26 provides a ligand contact to 5-phospho-alpha-D-ribose 1-diphosphate. 34 to 35 (FF) is a binding site for orotate. 5-phospho-alpha-D-ribose 1-diphosphate contacts are provided by residues 72–73 (YK), Arg-99, Lys-100, Lys-103, His-105, and 124–132 (DDVITAGTA). Orotate is bound by residues Thr-128 and Arg-156.

Belongs to the purine/pyrimidine phosphoribosyltransferase family. PyrE subfamily. As to quaternary structure, homodimer. It depends on Mg(2+) as a cofactor.

It carries out the reaction orotidine 5'-phosphate + diphosphate = orotate + 5-phospho-alpha-D-ribose 1-diphosphate. The protein operates within pyrimidine metabolism; UMP biosynthesis via de novo pathway; UMP from orotate: step 1/2. In terms of biological role, catalyzes the transfer of a ribosyl phosphate group from 5-phosphoribose 1-diphosphate to orotate, leading to the formation of orotidine monophosphate (OMP). In Photobacterium profundum (strain SS9), this protein is Orotate phosphoribosyltransferase.